A 465-amino-acid chain; its full sequence is CUGBP Elav-like family member 3 (465 aa).

2 RRM domains span residues 7 to 88 (IKLF…PADS) and 95 to 174 (KLFV…FADT). Disordered regions lie at residues 283–311 (PVPT…QSPA) and 345–379 (PPAL…GPDG). Residues 345–358 (PPALVAQQPPPPPQ) are compositionally biased toward pro residues. Positions 359-373 (QQQQQQQQQQQQQQQ) are enriched in low complexity. An RRM 3 domain is found at 380–458 (CNIFIYHLPQ…KRLKVQLKRP (79 aa)).

The protein belongs to the CELF/BRUNOL family.

The protein localises to the nucleus. It localises to the cytoplasm. RNA-binding protein involved in the regulation of pre-mRNA alternative splicing. Mediates exon inclusion and/or exclusion in pre-mRNA that are subject to tissue-specific and developmentally regulated alternative splicing. Specifically activates exon 5 inclusion of cardiac isoforms of TNNT2 during heart remodeling at the juvenile to adult transition. Activates the splicing of MAPT/Tau exon 10. Binds to muscle-specific splicing enhancer (MSE) intronic sites flanking the alternative exon 5 of TNNT2 pre-mRNA. The sequence is that of CUGBP Elav-like family member 3 (Celf3) from Mus musculus (Mouse).